Consider the following 274-residue polypeptide: Membrane protein insertase YidC 2 (274 aa).

The signal sequence occupies residues 1–20; the sequence is MKKKLKLTSLLGLSLLIMTA. The N-palmitoyl cysteine moiety is linked to residue cysteine 21. Cysteine 21 carries the S-diacylglycerol cysteine lipid modification. The next 4 membrane-spanning stretches (helical) occupy residues 56-76, 128-148, 167-187, and 205-225; these read ISIG…LLPV, SDSL…FQAL, VDTT…STWL, and GIPV…ALYW.

The protein belongs to the OXA1/ALB3/YidC family. Type 2 subfamily.

The protein localises to the cell membrane. Required for the insertion and/or proper folding and/or complex formation of integral membrane proteins into the membrane. Involved in integration of membrane proteins that insert both dependently and independently of the Sec translocase complex, as well as at least some lipoproteins. This is Membrane protein insertase YidC 2 from Streptococcus pneumoniae serotype 4 (strain ATCC BAA-334 / TIGR4).